A 535-amino-acid polypeptide reads, in one-letter code: Portal protein (535 aa).

The protein belongs to the podoviridae portal protein family. As to quaternary structure, homododecamer. Interacts with major capsid protein. Interacts with the tail tube proteins gp11 and gp12. Interacts with the terminase large subunit. Interacts with the internal virion protein gp14.

Its subcellular location is the virion. Its function is as follows. Forms the portal vertex of the capsid. This portal plays critical roles in head assembly, genome packaging, neck/tail attachment, and genome ejection. The portal protein multimerizes as a single ring-shaped homododecamer arranged around a central channel. This Enterobacteria phage T3 (Bacteriophage T3) protein is Portal protein (8).